The sequence spans 636 residues: Polyadenylate-binding protein 1 (636 aa).

Position 1 is an N-acetylmethionine (Met-1). RRM domains lie at 11 to 89 (ASLY…WSQR), 99 to 175 (GNIF…RFKS), 191 to 268 (TNVY…RAQK), and 294 to 370 (VNLY…LAQR). Residues 166-289 (RKVFVGRFKS…FEQMKQDRIT (124 aa)) are UNR-binding. Position 299 is an N6-methyllysine (Lys-299). Ser-315 carries the post-translational modification Phosphoserine. The residue at position 319 (Thr-319) is a Phosphothreonine. Omega-N-methylarginine is present on residues Arg-385, Arg-419, Arg-432, and Arg-436. Omega-N-methylated arginine; by CARM1 occurs at positions 455 and 460. 2 positions are modified to omega-N-methylarginine: Arg-475 and Arg-481. Arg-493 carries the post-translational modification Asymmetric dimethylarginine; alternate. Residue Arg-493 is modified to Dimethylated arginine; alternate. Arg-493 carries the post-translational modification Omega-N-methylarginine; alternate. The residue at position 506 (Arg-506) is an Omega-N-methylarginine. Position 512 is an N6-acetyllysine (Lys-512). Arg-518 is modified (omega-N-methylarginine). The region spanning 542 to 619 (QEPLTASMLA…AVAVLQAHQA (78 aa)) is the PABC domain.

It belongs to the polyadenylate-binding protein type-1 family. May form homodimers. Component of a multisubunit autoregulatory ribonucleoprotein complex (ARC), at least composed of IGF2BP1, PABPC1 and CSDE1. Directly interacts with IGF2BP1. Part of a complex associated with the FOS mCRD domain and consisting of HNRPD, SYNCRIP, PAIP1 and CSDE1/UNR. Interacts with PAIP1 and PAIP2 (via the PABPC1-interacting motifs PAM1 and PAM2). Interacts with PAIP1 with a 1:1 stoichiometry and with PAIP2 with a 1:2 stoichiometry. The interaction with CSDE1 is direct and RNA-independent. Found in a mRNP complex with YBX2. Interacts with TENT2/GLD2. Identified in the spliceosome C complex. Identified in a mRNP complex, at least composed of DHX9, DDX3X, ELAVL1, HNRNPU, IGF2BP1, ILF3, PABPC1, PCBP2, PTBP2, STAU1, STAU2, SYNCRIP and YBX1. The interaction with DDX3X is direct and RNA-independent. This interaction increases in stressed cells and decreases during cell recovery. Identified in a IGF2BP1-dependent mRNP granule complex containing untranslated mRNAs. Interacts with NXF1/TAP. Interacts with PIWIL1. Interacts with AGO1, AGO2, GSPT1 and GSPT2. Interacts with LARP4B. Interacts (via the second and third RRM domains and the C-terminus) with PAIP2B (via central acidic portion and C-terminus). Forms a complex with LARP1 and SHFL. Interacts with LARP4. Interacts with ZFC3H1 in a RNase-sensitive manner. Interacts with TRIM71 (via NHL repeats) in an RNA-dependent manner. Interacts with TENT5C; the interaction has no effect on TENT5C poly(A) polymerase function. Interacts with G3BP1 and G3BP2. Interacts with ENDOV; the interaction is RNA-dependent and stimulates ENDOV activity. Interacts with UPF1; the interaction is RNA-dependent. Interacts with IGF2BP2 and IGF2BP3. May interact with SETX. Interacts with RBM46. Interacts with PAN3 isoform 1/Pan3L and isoform 3/Pan3S (via N-terminus); interaction with isoform 1 is less efficient than with isoform 3. Phosphorylated by MAPKAPK2. In terms of processing, methylated by CARM1. Arg-493 is dimethylated, probably to asymmetric dimethylarginine.

Its subcellular location is the cytoplasm. The protein localises to the stress granule. It localises to the nucleus. It is found in the cell projection. The protein resides in the lamellipodium. Functionally, binds the poly(A) tail of mRNA, including that of its own transcript, and regulates processes of mRNA metabolism such as pre-mRNA splicing and mRNA stability. Its function in translational initiation regulation can either be enhanced by PAIP1 or repressed by PAIP2. Can probably bind to cytoplasmic RNA sequences other than poly(A) in vivo. Binds to N6-methyladenosine (m6A)-containing mRNAs and contributes to MYC stability by binding to m6A-containing MYC mRNAs. Involved in translationally coupled mRNA turnover. Implicated with other RNA-binding proteins in the cytoplasmic deadenylation/translational and decay interplay of the FOS mRNA mediated by the major coding-region determinant of instability (mCRD) domain. Involved in regulation of nonsense-mediated decay (NMD) of mRNAs containing premature stop codons; for the recognition of premature termination codons (PTC) and initiation of NMD a competitive interaction between UPF1 and PABPC1 with the ribosome-bound release factors is proposed. By binding to long poly(A) tails, may protect them from uridylation by ZCCHC6/ZCCHC11 and hence contribute to mRNA stability. This is Polyadenylate-binding protein 1 (Pabpc1) from Rattus norvegicus (Rat).